A 203-amino-acid chain; its full sequence is Small ribosomal subunit protein uS7 (203 aa).

A disordered region spans residues M1 to A21.

This sequence belongs to the universal ribosomal protein uS7 family. Part of the 30S ribosomal subunit.

Its function is as follows. One of the primary rRNA binding proteins, it binds directly to 16S rRNA where it nucleates assembly of the head domain of the 30S subunit. Is located at the subunit interface close to the decoding center. The protein is Small ribosomal subunit protein uS7 of Natronomonas pharaonis (strain ATCC 35678 / DSM 2160 / CIP 103997 / JCM 8858 / NBRC 14720 / NCIMB 2260 / Gabara) (Halobacterium pharaonis).